The chain runs to 330 residues: MNDTLLTLILIVIKLGLVLGTVLTLAAYMVLAERKILGRMQMRYGPNRVGWGGMLQPLADLIKLLCKEDLIPQRADRWVFMLAPAISTITALLAFAVIPFGAPLQLFDRSLPMVICDLNIGLLYLFALSSLAVYGVALGGWASHSKYALLGGLRAMAQMISYELAMGLAIVPVVMTARSFSLTAIVEAQQSLPNMLRHPLAFFIFLVAIMAESKRTPFDMPEAENELVAGFHTEYSGMRFGMFFVGEYLNLIVLGSMLTVLFLGGWYGPLLPGICWFLIKVLGVAFFFIWVRGTMPRLRYDQLMAFGWKILVPLGLLNILVTAAWLIWRG.

Transmembrane regions (helical) follow at residues 5–25 (LLTL…VLTL), 78–98 (WVFM…FAVI), 120–140 (IGLL…ALGG), 155–175 (AMAQ…PVVM), 191–211 (SLPN…AIMA), 243–263 (FFVG…VLFL), 271–291 (LPGI…FIWV), and 308–328 (WKIL…WLIW).

This sequence belongs to the complex I subunit 1 family. In terms of assembly, NDH-1 is composed of 14 different subunits. Subunits NuoA, H, J, K, L, M, N constitute the membrane sector of the complex.

The protein resides in the cell inner membrane. It catalyses the reaction a quinone + NADH + 5 H(+)(in) = a quinol + NAD(+) + 4 H(+)(out). Functionally, NDH-1 shuttles electrons from NADH, via FMN and iron-sulfur (Fe-S) centers, to quinones in the respiratory chain. The immediate electron acceptor for the enzyme in this species is believed to be ubiquinone. Couples the redox reaction to proton translocation (for every two electrons transferred, four hydrogen ions are translocated across the cytoplasmic membrane), and thus conserves the redox energy in a proton gradient. This subunit may bind ubiquinone. The protein is NADH-quinone oxidoreductase subunit H of Syntrophotalea carbinolica (strain DSM 2380 / NBRC 103641 / GraBd1) (Pelobacter carbinolicus).